A 118-amino-acid polypeptide reads, in one-letter code: Ig heavy chain V region AC38 205.12 (118 aa).

Residues 1-98 form a v segment region; the sequence is EVQLQQSGPE…EDSAVYYCAR (98 aa). C22 and C96 are disulfide-bonded. Residues 99-104 form a d segment region; sequence GYGYDP. The tract at residues 105–118 is j segment; the sequence is FDVWGTGTTVTVSS.

This is Ig heavy chain V region AC38 205.12 from Mus musculus (Mouse).